A 377-amino-acid chain; its full sequence is Succinyl-diaminopimelate desuccinylase (377 aa).

Residue H67 coordinates Zn(2+). Residue D69 is part of the active site. Position 100 (D100) interacts with Zn(2+). The active-site Proton acceptor is E134. The Zn(2+) site is built by E135, E163, and H349.

It belongs to the peptidase M20A family. DapE subfamily. As to quaternary structure, homodimer. Zn(2+) serves as cofactor. It depends on Co(2+) as a cofactor.

It catalyses the reaction N-succinyl-(2S,6S)-2,6-diaminopimelate + H2O = (2S,6S)-2,6-diaminopimelate + succinate. It functions in the pathway amino-acid biosynthesis; L-lysine biosynthesis via DAP pathway; LL-2,6-diaminopimelate from (S)-tetrahydrodipicolinate (succinylase route): step 3/3. Catalyzes the hydrolysis of N-succinyl-L,L-diaminopimelic acid (SDAP), forming succinate and LL-2,6-diaminopimelate (DAP), an intermediate involved in the bacterial biosynthesis of lysine and meso-diaminopimelic acid, an essential component of bacterial cell walls. This chain is Succinyl-diaminopimelate desuccinylase, found in Actinobacillus pleuropneumoniae serotype 5b (strain L20).